Consider the following 95-residue polypeptide: Alpha-defensin 20 (95 aa).

The first 19 residues, 1 to 19 (MKTLVLLSALVLLAFQVQA), serve as a signal peptide directing secretion. Positions 20 to 58 (DPIQNTDEETNTEEQPGEEDQAVSVSFGDPEGSALHEKS) are excised as a propeptide. Residues 22 to 57 (IQNTDEETNTEEQPGEEDQAVSVSFGDPEGSALHEK) are disordered. Positions 25 to 40 (TDEETNTEEQPGEEDQ) are enriched in acidic residues. Intrachain disulfides connect C64–C89, C66–C81, and C71–C88.

It belongs to the alpha-defensin family.

Its subcellular location is the secreted. Its function is as follows. May have microbicidal activities. In Mus musculus (Mouse), this protein is Alpha-defensin 20 (Defa20).